The sequence spans 505 residues: Lysine--tRNA ligase (505 aa).

The Mg(2+) site is built by Glu415 and Glu422.

It belongs to the class-II aminoacyl-tRNA synthetase family. Homodimer. Mg(2+) serves as cofactor.

The protein resides in the cytoplasm. It catalyses the reaction tRNA(Lys) + L-lysine + ATP = L-lysyl-tRNA(Lys) + AMP + diphosphate. This is Lysine--tRNA ligase from Vibrio parahaemolyticus serotype O3:K6 (strain RIMD 2210633).